The following is a 348-amino-acid chain: Phosphoribosylformylglycinamidine cyclo-ligase (348 aa).

It belongs to the AIR synthase family.

It localises to the cytoplasm. The catalysed reaction is 2-formamido-N(1)-(5-O-phospho-beta-D-ribosyl)acetamidine + ATP = 5-amino-1-(5-phospho-beta-D-ribosyl)imidazole + ADP + phosphate + H(+). Its pathway is purine metabolism; IMP biosynthesis via de novo pathway; 5-amino-1-(5-phospho-D-ribosyl)imidazole from N(2)-formyl-N(1)-(5-phospho-D-ribosyl)glycinamide: step 2/2. The sequence is that of Phosphoribosylformylglycinamidine cyclo-ligase from Cereibacter sphaeroides (strain KD131 / KCTC 12085) (Rhodobacter sphaeroides).